Consider the following 302-residue polypeptide: Phospho-N-acetylmuramoyl-pentapeptide-transferase (302 aa).

Helical transmembrane passes span 1-21, 42-62, 67-87, 101-121, 123-143, 154-174, 178-198, 204-224, 229-249, and 279-299; these read MIAA…NLFR, GTPT…GVLS, VILT…FLSI, ALLQ…ETAV, FFGI…IVIV, GLDG…WFFL, GFSE…LIFN, IFMG…VSVL, FYLI…ILQI, and IVAV…EVFG.

The protein belongs to the glycosyltransferase 4 family. MraY subfamily. The cofactor is Mg(2+).

Its subcellular location is the cell inner membrane. It catalyses the reaction UDP-N-acetyl-alpha-D-muramoyl-L-alanyl-gamma-D-glutamyl-meso-2,6-diaminopimeloyl-D-alanyl-D-alanine + di-trans,octa-cis-undecaprenyl phosphate = di-trans,octa-cis-undecaprenyl diphospho-N-acetyl-alpha-D-muramoyl-L-alanyl-D-glutamyl-meso-2,6-diaminopimeloyl-D-alanyl-D-alanine + UMP. The protein operates within cell wall biogenesis; peptidoglycan biosynthesis. Catalyzes the initial step of the lipid cycle reactions in the biosynthesis of the cell wall peptidoglycan: transfers peptidoglycan precursor phospho-MurNAc-pentapeptide from UDP-MurNAc-pentapeptide onto the lipid carrier undecaprenyl phosphate, yielding undecaprenyl-pyrophosphoryl-MurNAc-pentapeptide, known as lipid I. The polypeptide is Phospho-N-acetylmuramoyl-pentapeptide-transferase (Thermotoga neapolitana (strain ATCC 49049 / DSM 4359 / NBRC 107923 / NS-E)).